The following is a 563-amino-acid chain: MDTKTLIASEIAKVVPELEQDAIFNLLETPKNSDMGDLAFPAFSLAKVLRKAPQMIASELAEQIDESQFEKVVAVGPYINFFLDKAKISSQVLEQVITAGSDYAQQDEGQGRNVAIDMSSPNIAKPFSIGHLRSTVIGDSLAHIFAKMGYKPVKINHLGDWGKQFGMLIVAYKKWGDETAVQAHPIDELLKLYVRINAEAETDPTVDEEAREWFRKLEDGDKEATELWQWFRDESLLEFNRLYDQLHVTFDSYNGEAFYNDKMDEVLDLLEAKNLLVESKGAQVVNLEKYGIEHPALIKKSDGATLYITRDLAAALYRKRTYDFAKSVYVVGNEQAAHFKQLKAVLKEMGYDWSDDMTHVAFGLVTKGGAKLSTRKGNVILLEPTVAEAINRAASQIEAKNPNLADKEAVAHAVGVGAIKFYDLKTDRMNGYDFDLEAMVSFEGETGPYVQYAHARIQSILRKADFTPSATTTYSLADAESWEIIKLIQDFPRIIKRTSDNFEPSIMAKFAINLAQSFNKYYAHTRILDDNSERDNRLALCYATATVLKEALRLLGVDAPNEM.

The 'HIGH' region signature appears at 121 to 131; sequence PNIAKPFSIGH.

The protein belongs to the class-I aminoacyl-tRNA synthetase family. In terms of assembly, monomer.

It is found in the cytoplasm. The enzyme catalyses tRNA(Arg) + L-arginine + ATP = L-arginyl-tRNA(Arg) + AMP + diphosphate. This chain is Arginine--tRNA ligase, found in Streptococcus pyogenes serotype M6 (strain ATCC BAA-946 / MGAS10394).